Consider the following 505-residue polypeptide: UDP-N-acetylglucosamine diphosphorylase 1 (505 aa).

The segment covering 1–10 has biased composition (basic and acidic residues); sequence MIEPSMEREN. A disordered region spans residues 1–32; it reads MIEPSMERENGALTAATTTTTAVTSPPPMASS. Residues 14-24 show a composition bias toward low complexity; it reads TAATTTTTAVT. The Substrate binding signature appears at 134–137; the sequence is LSGG. N253 lines the substrate pocket. The Substrate binding signature appears at 335–336; the sequence is EY. K432 contacts substrate.

This sequence belongs to the UDPGP type 1 family. Monomer. It depends on Mg(2+) as a cofactor. Mn(2+) is required as a cofactor. As to expression, expressed in root tips, stipules and mature pollen grains.

The catalysed reaction is N-acetyl-alpha-D-glucosamine 1-phosphate + UTP + H(+) = UDP-N-acetyl-alpha-D-glucosamine + diphosphate. It catalyses the reaction N-acetyl-alpha-D-galactosamine 1-phosphate + UTP + H(+) = UDP-N-acetyl-alpha-D-galactosamine + diphosphate. The protein operates within nucleotide-sugar biosynthesis; UDP-N-acetyl-alpha-D-glucosamine biosynthesis; UDP-N-acetyl-alpha-D-glucosamine from N-acetyl-alpha-D-glucosamine 1-phosphate: step 1/1. With respect to regulation, inhibited by hygromycin and streptomycin, but not by gentamycin or kanamycin. Its function is as follows. Uridylyltransferase involved in the biosynthesis of UDP-glucosamine, an essential precursor for glycoprotein and glycolipid synthesis. Can use both UDP-glucosamine and the 4-epimer UDP-galactosamine as substrates, but no other sugars or NTPs. Acts redundantly with GLCNAC1PUT2. Required for gametogenesis and embryo development. In Arabidopsis thaliana (Mouse-ear cress), this protein is UDP-N-acetylglucosamine diphosphorylase 1 (GLCNAC1PUT1).